The primary structure comprises 151 residues: Thymosin beta (151 aa).

A run of 4 repeats spans residues 24–29, 62–67, 100–105, and 134–139. The tract at residues 24 to 139 is 4 X 6 AA repeat of L-[KH]-[KSH]-[VT]-[EP]-[TV]; sequence LKKVETTEKN…DKSALHHVET (116 aa).

It belongs to the thymosin beta family. In terms of assembly, interacts (via repeats 1, 2 and 4) with G-actin in a 1:3 ratio. Interacts (via repeats 2 and 3) with F-actin. At the comma stage, enriched in the developing nerve ring (at protein level). Ubiquitously expressed in larvae and adults with enrichment in the spermatheca, the intestinal tract and the posterior bulb of the pharynx (at protein level). Expressed in oocytes and in the gonad (at protein level).

It localises to the cytoplasm. It is found in the cell cortex. The protein localises to the cell junction. The protein resides in the cytoskeleton. Its function is as follows. Plays an important role in the organization of the cytoskeleton by regulating actin polymerization in two ways. Firstly, by binding to and sequestering actin monomers (G actin) inhibits actin polymerization. Secondly, by binding directly filamentous actin (F actin) promotes actin polymerization. Regulates the formation of cortical actin in oocytes conferring them enough rigidity to sustain the contractions during ovulation. The sequence is that of Thymosin beta from Caenorhabditis elegans.